The following is a 548-amino-acid chain: Eukaryotic translation initiation factor 3 subunit D (548 aa).

An N6-acetyllysine modification is found at K53. S161 is modified (phosphoserine). The segment at 285–299 (DFDLLTVSETANEPP) is RNA gate. The segment at 523 to 548 (PDGTFSSDEDEEEEEEEEEEEEEEET) is disordered. 2 positions are modified to phosphoserine: S528 and S529. Residues 529 to 548 (SDEDEEEEEEEEEEEEEEET) show a composition bias toward acidic residues.

It belongs to the eIF-3 subunit D family. Component of the eukaryotic translation initiation factor 3 (eIF-3) complex, which is composed of 13 subunits: EIF3A, EIF3B, EIF3C, EIF3D, EIF3E, EIF3F, EIF3G, EIF3H, EIF3I, EIF3J, EIF3K, EIF3L and EIF3M. The eIF-3 complex appears to include 3 stable modules: module A is composed of EIF3A, EIF3B, EIF3G and EIF3I; module B is composed of EIF3F, EIF3H, and EIF3M; and module C is composed of EIF3C, EIF3D, EIF3E, EIF3K and EIF3L. EIF3C of module C binds EIF3B of module A and EIF3H of module B, thereby linking the three modules. EIF3J is a labile subunit that binds to the eIF-3 complex via EIF3B. The eIF-3 complex interacts with RPS6KB1 under conditions of nutrient depletion. Mitogenic stimulation leads to binding and activation of a complex composed of MTOR and RPTOR, leading to phosphorylation and release of RPS6KB1 and binding of EIF4B to eIF-3. As to quaternary structure, (Microbial infection) Interacts with Norwalk virus VPg protein.

The protein localises to the cytoplasm. Its function is as follows. mRNA cap-binding component of the eukaryotic translation initiation factor 3 (eIF-3) complex, a complex required for several steps in the initiation of protein synthesis of a specialized repertoire of mRNAs. The eIF-3 complex associates with the 40S ribosome and facilitates the recruitment of eIF-1, eIF-1A, eIF-2:GTP:methionyl-tRNAi and eIF-5 to form the 43S pre-initiation complex (43S PIC). The eIF-3 complex stimulates mRNA recruitment to the 43S PIC and scanning of the mRNA for AUG recognition. The eIF-3 complex is also required for disassembly and recycling of post-termination ribosomal complexes and subsequently prevents premature joining of the 40S and 60S ribosomal subunits prior to initiation. The eIF-3 complex specifically targets and initiates translation of a subset of mRNAs involved in cell proliferation, including cell cycling, differentiation and apoptosis, and uses different modes of RNA stem-loop binding to exert either translational activation or repression. In the eIF-3 complex, EIF3D specifically recognizes and binds the 7-methylguanosine cap of a subset of mRNAs. (Microbial infection) In case of FCV infection, plays a role in the ribosomal termination-reinitiation event leading to the translation of VP2. The protein is Eukaryotic translation initiation factor 3 subunit D of Homo sapiens (Human).